Consider the following 393-residue polypeptide: Phosphopentomutase (393 aa).

Residues Asp15, Asp288, His293, Asp329, His330, and His341 each contribute to the Mn(2+) site.

The protein belongs to the phosphopentomutase family. Mn(2+) is required as a cofactor.

The protein resides in the cytoplasm. It catalyses the reaction 2-deoxy-alpha-D-ribose 1-phosphate = 2-deoxy-D-ribose 5-phosphate. It carries out the reaction alpha-D-ribose 1-phosphate = D-ribose 5-phosphate. It participates in carbohydrate degradation; 2-deoxy-D-ribose 1-phosphate degradation; D-glyceraldehyde 3-phosphate and acetaldehyde from 2-deoxy-alpha-D-ribose 1-phosphate: step 1/2. Its function is as follows. Isomerase that catalyzes the conversion of deoxy-ribose 1-phosphate (dRib-1-P) and ribose 1-phosphate (Rib-1-P) to deoxy-ribose 5-phosphate (dRib-5-P) and ribose 5-phosphate (Rib-5-P), respectively. This chain is Phosphopentomutase, found in Halalkalibacterium halodurans (strain ATCC BAA-125 / DSM 18197 / FERM 7344 / JCM 9153 / C-125) (Bacillus halodurans).